Reading from the N-terminus, the 394-residue chain is Guanine nucleotide-binding protein G(s) subunit alpha isoforms short (394 aa).

Positions 1 to 23 are disordered; it reads MGCLGNSKTEDQRNEEKAQREAN. The N-palmitoyl glycine moiety is linked to residue glycine 2. The S-palmitoyl cysteine moiety is linked to residue cysteine 3. Residues 8-23 are compositionally biased toward basic and acidic residues; that stretch reads KTEDQRNEEKAQREAN. A G-alpha domain is found at 39–394; the sequence is ATHRLLLLGA…RMHLRQYELL (356 aa). Residues 42 to 55 form a G1 motif region; it reads RLLLLGAGESGKST. 47 to 55 contributes to the GTP binding site; that stretch reads GAGESGKST. Position 54 (serine 54) interacts with Mg(2+). Residues 68 to 90 form a disordered region; it reads FNGEGGEEDPQAARSNSDGEKAT. The interval 196–204 is G2 motif; that stretch reads DLLRCRVLT. Residues 197 to 204, 223 to 227, and 292 to 295 each bind GTP; these read LLRCRVLT, DVGGQ, and NKQD. Mg(2+) is bound at residue threonine 204. Residues 219–228 form a G3 motif region; sequence FHMFDVGGQR. Residues 288 to 295 are G4 motif; it reads ILFLNKQD. Lysine 300 is covalently cross-linked (Glycyl lysine isopeptide (Lys-Gly) (interchain with G-Cter in ubiquitin)). At serine 352 the chain carries Phosphoserine. The interval 364-369 is G5 motif; it reads TCAVDT. Alanine 366 contributes to the GTP binding site.

Belongs to the G-alpha family. G(s) subfamily. As to quaternary structure, heterotrimeric G proteins are composed of 3 units; alpha, beta and gamma. The alpha chain contains the guanine nucleotide binding site. Component of the TAS2R14-GNAS2 complex, consisting of TAS2R14, GNAS2, GNB1 and GNG2; within the complex interacts with TAS2R14; this complex plays a role in the perception of bitterness. Interacts with CRY1; the interaction may block GPCR-mediated regulation of cAMP concentrations. Interacts with ADCY6 and stimulates its adenylyl cyclase activity. Interacts with ADCY2 and ADCY5. Interacts (GDP-bound form) with RIC8B; promoting GNAS folding and association with the plasma membrane. Stimulates the ADCY5 adenylyl cyclase activity. Interaction with SASH1. Interacts with GASL2L2.

It localises to the cell membrane. The enzyme catalyses GTP + H2O = GDP + phosphate + H(+). In terms of biological role, guanine nucleotide-binding proteins (G proteins) function as transducers in numerous signaling pathways controlled by G protein-coupled receptors (GPCRs). The alpha chain contains the guanine nucleotide binding site and alternates between an active, GTP-bound state and an inactive, GDP-bound state. Signaling by an activated GPCR promotes GDP release and GTP binding. The alpha subunit has a low GTPase activity that converts bound GTP to GDP, thereby terminating the signal. Both GDP release and GTP hydrolysis are modulated by numerous regulatory proteins. Signaling involves the activation of adenylyl cyclases, resulting in increased levels of the signaling molecule cAMP. Functions downstream of beta-adrenergic receptors. Stimulates the Ras signaling pathway via RAPGEF2. The protein is Guanine nucleotide-binding protein G(s) subunit alpha isoforms short (Gnas) of Mus musculus (Mouse).